The following is a 378-amino-acid chain: Protein RecA (378 aa).

An ATP-binding site is contributed by 79 to 86 (GPESSGKT).

The protein belongs to the RecA family.

The protein localises to the cytoplasm. Its function is as follows. Can catalyze the hydrolysis of ATP in the presence of single-stranded DNA, the ATP-dependent uptake of single-stranded DNA by duplex DNA, and the ATP-dependent hybridization of homologous single-stranded DNAs. It interacts with LexA causing its activation and leading to its autocatalytic cleavage. The polypeptide is Protein RecA (Streptococcus equi subsp. zooepidemicus (strain MGCS10565)).